A 360-amino-acid polypeptide reads, in one-letter code: Phospho-N-acetylmuramoyl-pentapeptide-transferase (360 aa).

The next 10 helical transmembrane spans lie at 21 to 41 (YVTF…LWWG), 74 to 94 (MGGI…GDLG), 97 to 117 (YVWV…IDDY), 135 to 155 (ILQS…ADTV), 168 to 188 (IMPQ…VGSS), 199 to 219 (GLAI…AYLS), 236 to 256 (AGEL…FLWF), 263 to 283 (VFMG…IAVL), 288 to 308 (ILLV…ILQV), and 338 to 358 (VIVR…ATLK).

It belongs to the glycosyltransferase 4 family. MraY subfamily. The cofactor is Mg(2+).

It is found in the cell inner membrane. The catalysed reaction is UDP-N-acetyl-alpha-D-muramoyl-L-alanyl-gamma-D-glutamyl-meso-2,6-diaminopimeloyl-D-alanyl-D-alanine + di-trans,octa-cis-undecaprenyl phosphate = di-trans,octa-cis-undecaprenyl diphospho-N-acetyl-alpha-D-muramoyl-L-alanyl-D-glutamyl-meso-2,6-diaminopimeloyl-D-alanyl-D-alanine + UMP. It participates in cell wall biogenesis; peptidoglycan biosynthesis. Catalyzes the initial step of the lipid cycle reactions in the biosynthesis of the cell wall peptidoglycan: transfers peptidoglycan precursor phospho-MurNAc-pentapeptide from UDP-MurNAc-pentapeptide onto the lipid carrier undecaprenyl phosphate, yielding undecaprenyl-pyrophosphoryl-MurNAc-pentapeptide, known as lipid I. The polypeptide is Phospho-N-acetylmuramoyl-pentapeptide-transferase (Shewanella violacea (strain JCM 10179 / CIP 106290 / LMG 19151 / DSS12)).